Consider the following 123-residue polypeptide: Histone H2B (123 aa).

The interval M1–R31 is disordered. P2 carries the post-translational modification N-methylproline; partial. K44 bears the N6-succinyllysine mark. Residue S110 is glycosylated (O-linked (GlcNAc) serine). An N6-succinyllysine mark is found at K114 and K118. A Glycyl lysine isopeptide (Lys-Gly) (interchain with G-Cter in ubiquitin) cross-link involves residue K118.

Belongs to the histone H2B family. The nucleosome is a histone octamer containing two molecules each of H2A, H2B, H3 and H4 assembled in one H3-H4 heterotetramer and two H2A-H2B heterodimers. The octamer wraps approximately 147 bp of DNA. Phosphorylated by the catalytic component of the Dbf4-dependent kinase (DDK) complex Cdc7. In terms of processing, monoubiquitination of Lys-118 by Bre1 gives a specific tag for epigenetic transcriptional activation and is also prerequisite for histone H3 'Lys-4' and 'Lys-79' methylation. Deubiquitination of Lys-118 by the SAGA complex is involved in activating transcription of a large subset of genes. Post-translationally, methylation at Pro-2 increases upon heat shock. GlcNAcylation at Ser-110 promotes monoubiquitination of Lys-118. It fluctuates in response to extracellular glucose, and associates with transcribed genes.

The protein localises to the nucleus. Its subcellular location is the chromosome. Its function is as follows. Core component of nucleosome. Nucleosomes wrap and compact DNA into chromatin, limiting DNA accessibility to the cellular machineries which require DNA as a template. Histones thereby play a central role in transcription regulation, DNA repair, DNA replication and chromosomal stability. DNA accessibility is regulated via a complex set of post-translational modifications of histones, also called histone code, and nucleosome remodeling. The chain is Histone H2B (His2B) from Drosophila sechellia (Fruit fly).